The following is a 51-amino-acid chain: Cytoplasmic FMR1-interacting protein 1 (51 aa).

It belongs to the CYFIP family. Component of the WAVE1 complex composed of ABI2, CYFIP1 or CYFIP2, BRK1, NCKAP1 and WASF1/WAVE1. Within the complex, a heterodimer containing NCKAP1 and CYFIP1 interacts with a heterotrimer formed by WAVE1, ABI2 and BRK1. Component of the CYFIP1-EIF4E-FMR1 complex which is composed of CYFIP, EIF4E and FMR1. Interacts with FMR1 but does not bind to related proteins FXR1 or FXR2. Interaction with EIF4E stimulates FMR1 binding. Component of the WAVE2 complex composed of ABI1, CYFIP1/SRA1, NCKAP1/NAP1 (NCKAP1l/HEM1 in hematopoietic cells) and WASF2/WAVE2. Interacts with the active GTP-bound form of RAC1. Interacts through its C-terminus with the C-terminus of DPYSL2/CRMP2 which is necessary for DPYSL2-induced axon outgrowth. Interacts with NYAP1, NYAP2 and MYO16. Interacts with TMEM108 (via N-terminus); the interaction associates TMEM108 with the WAVE1 complex.

It is found in the cytoplasm. It localises to the perinuclear region. Its subcellular location is the cell projection. The protein resides in the lamellipodium. The protein localises to the ruffle. It is found in the synapse. It localises to the synaptosome. Functionally, component of the CYFIP1-EIF4E-FMR1 complex which binds to the mRNA cap and mediates translational repression. In the CYFIP1-EIF4E-FMR1 complex this subunit is an adapter between EIF4E and FMR1. Promotes the translation repression activity of FMR1 in brain probably by mediating its association with EIF4E and mRNA. Regulates formation of membrane ruffles and lamellipodia. Plays a role in axon outgrowth. Binds to F-actin but not to RNA. Part of the WAVE complex that regulates actin filament reorganization via its interaction with the Arp2/3 complex. Actin remodeling activity is regulated by RAC1. Regulator of epithelial morphogenesis. As component of the WAVE1 complex, required for BDNF-NTRK2 endocytic trafficking and signaling from early endosomes. The polypeptide is Cytoplasmic FMR1-interacting protein 1 (Bos taurus (Bovine)).